Consider the following 338-residue polypeptide: Anthranilate phosphoribosyltransferase (338 aa).

5-phospho-alpha-D-ribose 1-diphosphate contacts are provided by residues glycine 80, 83–84 (GD), threonine 88, 90–93 (NIST), 108–116 (KHGNRAVSS), and serine 120. Glycine 80 is a binding site for anthranilate. Serine 92 is a binding site for Mg(2+). Asparagine 111 is an anthranilate binding site. Position 166 (arginine 166) interacts with anthranilate. Residues aspartate 225 and glutamate 226 each coordinate Mg(2+).

It belongs to the anthranilate phosphoribosyltransferase family. As to quaternary structure, homodimer. Mg(2+) serves as cofactor.

It carries out the reaction N-(5-phospho-beta-D-ribosyl)anthranilate + diphosphate = 5-phospho-alpha-D-ribose 1-diphosphate + anthranilate. It functions in the pathway amino-acid biosynthesis; L-tryptophan biosynthesis; L-tryptophan from chorismate: step 2/5. Its function is as follows. Catalyzes the transfer of the phosphoribosyl group of 5-phosphorylribose-1-pyrophosphate (PRPP) to anthranilate to yield N-(5'-phosphoribosyl)-anthranilate (PRA). The polypeptide is Anthranilate phosphoribosyltransferase (Thermoanaerobacter sp. (strain X514)).